Reading from the N-terminus, the 104-residue chain is Small ribosomal subunit protein bS16 (104 aa).

It belongs to the bacterial ribosomal protein bS16 family.

This is Small ribosomal subunit protein bS16 from Gemmatimonas aurantiaca (strain DSM 14586 / JCM 11422 / NBRC 100505 / T-27).